The following is a 335-amino-acid chain: Dolichyl-diphosphooligosaccharide--protein glycosyltransferase subunit MAGT1 (335 aa).

An N-terminal signal peptide occupies residues Met1–Ala29. Residues Gln30–Pro184 lie on the Extracellular side of the membrane. The region spanning Trp47 to Asp175 is the Thioredoxin domain. N-linked (GlcNAc...) asparagine glycosylation occurs at Asn71. Cysteines 87 and 90 form a disulfide. The chain crosses the membrane as a helical span at residues Asn185–Leu205. The Cytoplasmic portion of the chain corresponds to Arg206–Asn209. Residues Met210–Met230 form a helical membrane-spanning segment. The Extracellular segment spans residues Thr231 to His270. The helical transmembrane segment at Ile271–Thr291 threads the bilayer. Residues Ser292–Lys300 are Cytoplasmic-facing. Residues Ile301–Phe321 form a helical membrane-spanning segment. At Arg322–Ser335 the chain is on the extracellular side.

This sequence belongs to the OST3/OST6 family. Accessory component of the STT3B-containing form of the oligosaccharyltransferase (OST) complex. OST exists in two different complex forms which contain common core subunits RPN1, RPN2, OST48, OST4, DAD1 and TMEM258, either STT3A or STT3B as catalytic subunits, and form-specific accessory subunits. OST can form stable complexes with the Sec61 complex or with both the Sec61 and TRAP complexes. The association of TUSC3 or MAGT1 with the STT3B-containing complex seems to be mutually exclusvice. As to expression, ubiquitous. Expressed at very low levels in brain, lung and kidney.

It localises to the cell membrane. Its subcellular location is the endoplasmic reticulum. It is found in the endoplasmic reticulum membrane. The protein operates within protein modification; protein glycosylation. In terms of biological role, accessory component of the STT3B-containing form of the N-oligosaccharyl transferase (OST) complex which catalyzes the transfer of a high mannose oligosaccharide from a lipid-linked oligosaccharide donor to an asparagine residue within an Asn-X-Ser/Thr consensus motif in nascent polypeptide chains. Involved in N-glycosylation of STT3B-dependent substrates. Specifically required for the glycosylation of a subset of acceptor sites that are near cysteine residues; in this function seems to act redundantly with TUSC3. In its oxidized form proposed to form transient mixed disulfides with a glycoprotein substrate to facilitate access of STT3B to the unmodified acceptor site. Also has oxidoreductase-independent functions in the STT3B-containing OST complex possibly involving substrate recognition. Could indirectly play a role in Mg(2+) transport in epithelial cells. This chain is Dolichyl-diphosphooligosaccharide--protein glycosyltransferase subunit MAGT1, found in Homo sapiens (Human).